Here is a 427-residue protein sequence, read N- to C-terminus: MTEAMKITLSTQPADARWGDKATYSINNDGITLHLNGKDDLGLIQRAARKIDGLGIKQVALTGEGWDTERCWAFWAGYKGPKGVRTVMWPDLDDAQRQELDNRLTIIDWVRDTINAPAEELGPEQLAQRAVDLLCSVACDSVTYRITKGEDLREQNYMGLHTVGRGSERPPVLLALDYNPTGDKDAPVYACLVGKGITFDSGGYSIKQSAFMDSMKSDMGGAATVTGALAFAITRGLNKRVKLFLCCADNLISGNAFKLGDIIRYRNGKNVEVMNTDAEGRLVLADGLIDASAQHPQLIIDMATLTGAAKTALGNDYHALFSFDDTLAGRLLTSAAQENEPFWRLPLAEFHRNQLPSNFAELNNTGSAAYPAGASTAAGFLSHFVENYREGWLHIDCSATYRKAPVEQWAAGATGLGVRTIANLLTA.

Positions 195 and 200 each coordinate Mn(2+). Lys-207 is a catalytic residue. Residues Asp-218, Asp-277, and Glu-279 each coordinate Mn(2+). Arg-281 is an active-site residue.

Belongs to the peptidase M17 family. Homohexamer. The cofactor is Mn(2+).

The protein resides in the cytoplasm. The enzyme catalyses Release of an N-terminal amino acid, Xaa, from a peptide or arylamide. Xaa is preferably Glu or Asp but may be other amino acids, including Leu, Met, His, Cys and Gln.. Its function is as follows. Probably plays an important role in intracellular peptide degradation. This Salmonella agona (strain SL483) protein is Peptidase B.